The chain runs to 233 residues: 2-C-methyl-D-erythritol 4-phosphate cytidylyltransferase (233 aa).

It belongs to the IspD/TarI cytidylyltransferase family. IspD subfamily.

It carries out the reaction 2-C-methyl-D-erythritol 4-phosphate + CTP + H(+) = 4-CDP-2-C-methyl-D-erythritol + diphosphate. It functions in the pathway isoprenoid biosynthesis; isopentenyl diphosphate biosynthesis via DXP pathway; isopentenyl diphosphate from 1-deoxy-D-xylulose 5-phosphate: step 2/6. Catalyzes the formation of 4-diphosphocytidyl-2-C-methyl-D-erythritol from CTP and 2-C-methyl-D-erythritol 4-phosphate (MEP). This Lachnoclostridium phytofermentans (strain ATCC 700394 / DSM 18823 / ISDg) (Clostridium phytofermentans) protein is 2-C-methyl-D-erythritol 4-phosphate cytidylyltransferase.